A 103-amino-acid chain; its full sequence is Alkanal monooxygenase alpha chain (103 aa).

Heterodimer of an alpha and a beta chain.

The enzyme catalyses a long-chain fatty aldehyde + FMNH2 + O2 = a long-chain fatty acid + hnu + FMN + H2O + 2 H(+). Its function is as follows. Light-emitting reaction in luminous bacteria. The protein is Alkanal monooxygenase alpha chain (luxA) of Vibrio cholerae.